The primary structure comprises 398 residues: Argininosuccinate synthase (398 aa).

10–18 (AYSGGLDTS) serves as a coordination point for ATP. Residue Tyr-87 coordinates L-citrulline. Gly-117 contacts ATP. L-aspartate contacts are provided by Thr-119, Asn-123, and Asp-124. Asn-123 lines the L-citrulline pocket. Arg-127, Ser-175, Glu-260, and Tyr-272 together coordinate L-citrulline.

Belongs to the argininosuccinate synthase family. Type 1 subfamily. As to quaternary structure, homotetramer.

Its subcellular location is the cytoplasm. The catalysed reaction is L-citrulline + L-aspartate + ATP = 2-(N(omega)-L-arginino)succinate + AMP + diphosphate + H(+). The protein operates within amino-acid biosynthesis; L-arginine biosynthesis; L-arginine from L-ornithine and carbamoyl phosphate: step 2/3. This Lactococcus lactis subsp. lactis (strain IL1403) (Streptococcus lactis) protein is Argininosuccinate synthase.